We begin with the raw amino-acid sequence, 446 residues long: Glucarate dehydratase (446 aa).

Residues histidine 32, threonine 103, tyrosine 150, and lysine 205 each coordinate substrate. Lysine 207 acts as the Proton acceptor in catalysis. Mg(2+)-binding residues include aspartate 235, glutamate 266, and asparagine 289. 235–237 is a substrate binding site; sequence DPN. Substrate is bound by residues asparagine 289, 339 to 341, histidine 368, and arginine 422; that span reads HSN. Histidine 339 serves as the catalytic Proton acceptor.

The protein belongs to the mandelate racemase/muconate lactonizing enzyme family. GlucD subfamily. Homodimer. Mg(2+) is required as a cofactor.

It carries out the reaction D-glucarate = 5-dehydro-4-deoxy-D-glucarate + H2O. It functions in the pathway carbohydrate acid metabolism; D-glucarate degradation; 2,5-dioxopentanoate from D-glucarate: step 1/2. Its function is as follows. Catalyzes the dehydration of glucarate to 5-keto-4-deoxy-D-glucarate (5-kdGluc). Also acts on L-idarate. The polypeptide is Glucarate dehydratase (gudD) (Escherichia coli O157:H7).